Here is a 467-residue protein sequence, read N- to C-terminus: Putative sulfoquinovose importer (467 aa).

A run of 12 helical transmembrane segments spans residues Ile-17–Leu-37, Ile-54–Leu-74, Pro-88–Thr-108, Ala-121–Ile-141, Gly-160–Phe-180, Val-185–Cys-205, Leu-238–Ile-258, Trp-275–Val-295, Val-303–Ser-323, Ser-325–Leu-345, Ile-379–Pro-399, and Leu-414–Tyr-434.

It belongs to the sodium:galactoside symporter (TC 2.A.2) family.

It localises to the cell inner membrane. Could be involved in sulfoquinovose import. The chain is Putative sulfoquinovose importer (yihO) from Escherichia coli (strain K12).